We begin with the raw amino-acid sequence, 128 residues long: Large ribosomal subunit protein bL12 (128 aa).

Belongs to the bacterial ribosomal protein bL12 family. In terms of assembly, homodimer. Part of the ribosomal stalk of the 50S ribosomal subunit. Forms a multimeric L10(L12)X complex, where L10 forms an elongated spine to which 2 to 4 L12 dimers bind in a sequential fashion. Binds GTP-bound translation factors.

Functionally, forms part of the ribosomal stalk which helps the ribosome interact with GTP-bound translation factors. Is thus essential for accurate translation. This is Large ribosomal subunit protein bL12 from Corynebacterium kroppenstedtii (strain DSM 44385 / JCM 11950 / CIP 105744 / CCUG 35717).